Reading from the N-terminus, the 180-residue chain is Ribosome maturation factor RimM (180 aa).

One can recognise a PRC barrel domain in the interval Asn99–Phe179.

The protein belongs to the RimM family. Binds ribosomal protein uS19.

The protein resides in the cytoplasm. In terms of biological role, an accessory protein needed during the final step in the assembly of 30S ribosomal subunit, possibly for assembly of the head region. Essential for efficient processing of 16S rRNA. May be needed both before and after RbfA during the maturation of 16S rRNA. It has affinity for free ribosomal 30S subunits but not for 70S ribosomes. The polypeptide is Ribosome maturation factor RimM (Buchnera aphidicola subsp. Baizongia pistaciae (strain Bp)).